A 158-amino-acid polypeptide reads, in one-letter code: Nascent polypeptide-associated complex subunit beta (158 aa).

Disordered stretches follow at residues 1 to 40 and 119 to 158; these read MDQA…DKKL and ESYQ…SKVE. Basic residues predominate over residues 16–31; that stretch reads GKGKGTPRRKTKKVHK. Positions 34 to 99 constitute an NAC-A/B domain; it reads GTDDKKLQTS…GEDKELTELV (66 aa). Over residues 137–152 the composition is skewed to acidic residues; the sequence is DDDDDDEIPDLVEGEN.

It belongs to the NAC-beta family. In terms of assembly, part of the nascent polypeptide-associated complex (NAC), consisting of EGD2 and EGD1. NAC associates with ribosomes via EGD1.

The protein localises to the cytoplasm. It is found in the nucleus. Component of the nascent polypeptide-associated complex (NAC), a dynamic component of the ribosomal exit tunnel, protecting the emerging polypeptides from interaction with other cytoplasmic proteins to ensure appropriate nascent protein targeting. The NAC complex also promotes mitochondrial protein import by enhancing productive ribosome interactions with the outer mitochondrial membrane and blocks the inappropriate interaction of ribosomes translating non-secretory nascent polypeptides with translocation sites in the membrane of the endoplasmic reticulum. EGD1 may act as a transcription factor that exert a negative effect on the expression of several genes that are transcribed by RNA polymerase II. The protein is Nascent polypeptide-associated complex subunit beta (EGD1) of Ajellomyces capsulatus (strain NAm1 / WU24) (Darling's disease fungus).